We begin with the raw amino-acid sequence, 622 residues long: DNA-directed RNA polymerase subunit gamma (622 aa).

Cys-70, Cys-72, Cys-85, and Cys-88 together coordinate Zn(2+). Mg(2+)-binding residues include Asp-466, Asp-468, and Asp-470.

This sequence belongs to the RNA polymerase beta' chain family. RpoC1 subfamily. In terms of assembly, in cyanobacteria the RNAP catalytic core is composed of 2 alpha, 1 beta, 1 beta', 1 gamma and 1 omega subunit. When a sigma factor is associated with the core the holoenzyme is formed, which can initiate transcription. The cofactor is Mg(2+). It depends on Zn(2+) as a cofactor.

It catalyses the reaction RNA(n) + a ribonucleoside 5'-triphosphate = RNA(n+1) + diphosphate. DNA-dependent RNA polymerase catalyzes the transcription of DNA into RNA using the four ribonucleoside triphosphates as substrates. This Cyanothece sp. (strain PCC 7425 / ATCC 29141) protein is DNA-directed RNA polymerase subunit gamma.